The chain runs to 270 residues: Putative phosphoenolpyruvate synthase regulatory protein (270 aa).

ADP is bound at residue 150-157 (GVSRSGKT).

Belongs to the pyruvate, phosphate/water dikinase regulatory protein family. PSRP subfamily.

It carries out the reaction [pyruvate, water dikinase] + ADP = [pyruvate, water dikinase]-phosphate + AMP + H(+). The enzyme catalyses [pyruvate, water dikinase]-phosphate + phosphate + H(+) = [pyruvate, water dikinase] + diphosphate. Functionally, bifunctional serine/threonine kinase and phosphorylase involved in the regulation of the phosphoenolpyruvate synthase (PEPS) by catalyzing its phosphorylation/dephosphorylation. The protein is Putative phosphoenolpyruvate synthase regulatory protein of Cupriavidus metallidurans (strain ATCC 43123 / DSM 2839 / NBRC 102507 / CH34) (Ralstonia metallidurans).